Consider the following 197-residue polypeptide: Peptide deformylase (197 aa).

Residues Cys106 and His148 each coordinate Fe cation. Residue Glu149 is part of the active site. Position 152 (His152) interacts with Fe cation.

It belongs to the polypeptide deformylase family. Fe(2+) serves as cofactor.

The enzyme catalyses N-terminal N-formyl-L-methionyl-[peptide] + H2O = N-terminal L-methionyl-[peptide] + formate. Functionally, removes the formyl group from the N-terminal Met of newly synthesized proteins. Requires at least a dipeptide for an efficient rate of reaction. N-terminal L-methionine is a prerequisite for activity but the enzyme has broad specificity at other positions. The sequence is that of Peptide deformylase from Mycobacteroides abscessus (strain ATCC 19977 / DSM 44196 / CCUG 20993 / CIP 104536 / JCM 13569 / NCTC 13031 / TMC 1543 / L948) (Mycobacterium abscessus).